Here is a 1561-residue protein sequence, read N- to C-terminus: MASSAPSSSSCTFQAESSFGPAVASCRRAFDFTLYFEEVVFVLVPSCVFILLAATRLLFILRRARRFTTATAATTTSTDTSSSHSCGNAAQNQHTPIGHGLAHHHILQQCTAGLLVTLHVAGLILLCTTVPSRQRTDLSVPASVVAALAFGVVPVLAHFEHKRRRPSSGPRSSSLLVGLFLCVAVLLRAPLVRTHAALYGSGSALVAVEIASLVLQLVLIAVGEVSSWAADATSNFSPEESAGFLGRSFGSWLWGTFVTGYRTTLSLDSLVPIDSSLESRIVATSFDHILPVSPSGKPGKNGQYRLLLALFRSLGLYALAPVIPRLCLAGFTLAQPFLASATINYIGNGPAPDRDGYGLIGATFLIYTGIAVSTGWYWSLSYKNVTKIRGGLVDGVSQKMLRLSQQHGTESKVLTMMINDVYRITSTLAYAHELWVAPIETAIGTWMLCRHVGPPGLVVLGIIGVCLGTSTYVGKHMAIQQGVWLAAVERRIGATKKMLASIKAIKMMGAGPSVAEALERLRRLEFAASRKFRALIVGTLLSSYSTATLAPVLVFGTYIGATTAAADFSASTLFTSLIWISLLASPLIQLLQIIPSFGAALGSLERIDAFFEKQEFTDERDEATAVDSSCSEKGEKKKEHVSLSIHNSSFSYTDDSEDPILKDVNLVINRGQHVVVTGPAGCGKSLLLQAILGEVAPQNSGSRVCVDGKVAFCSQTPWLENLSARQVVSRFSRDKDPSWTDRVVDACELREFLEAQDPDATIGSQGSMLSGGERQRLALARAIQSRPDILLLDDVLSPIDYVTKKRILRQLFGKSGILHETGTTVVQVTQDHAVAQLADIVLRLDETGALRPYQFPPSQADVEDENGDVDNGAENTRPRESSHTTEAQSGPPEPKSKPTEITDRKVYATYFESIGFLNLVLFIGGGIIFAFCLKFPNVWVGWWTADSSDPDEASHNIGYWFGIYAMLNVLPLIAVAGWVAQLMMLIVPLSGSKLHRKLVDTVSKATFSFISRVDTGSLLNRFNQDLMFVDSRLPLDLFNTAAALLTGIAQVILIGVSAVYVLASIPVLAAVLFLLQHFYLRTSKQLRHLDLQSKAELHTRLSESYQGLATIRAARWQRQVHAEFQAGLDRSQAPVYLLWMVQTWLKLVLNLVVAGLALVVMGAAVGLHQHGSSSGASASASGIGIAFLNLTTLGETMTNLLTAWTSLETTLGAIARIVSFSRDTPAERDVLVRPDSLDHGGGGGGDRAEPPESWPESGGIKLEGVWATYDDDDESDENTDDSGGRPATDVAADGEKHEATTITTTSSTMTTTHYALKDISLEVRPGERVAVCGRTGSGKSTLLLALLGLVAVRRGRISIDGRDVAGVPRARLRGAVHVIPQDPFISVASGNGETIREALDPAGKLGDEEVTDVLQDCGVLDKIVGAGGLAASVSDEALSLSAGERQLFVLARLICRAGGRCRHGGGGILLLDEATSSLDVNTDGKTAEVLRKWLPNMTVLSVLHRLEAALKYDRVVVLEGGRVAHVVTPSESTVSSDIFAFFGRSRSFLESRETGGVSWLE.

The next 7 helical transmembrane spans lie at 34-54 (LYFEEVVFVLVPSCVFILLAA), 110-130 (CTAGLLVTLHVAGLILLCTTV), 139-159 (SVPASVVAALAFGVVPVLAHF), 172-192 (SSSLLVGLFLCVAVLLRAPLV), 202-222 (GSALVAVEIASLVLQLVLIAV), 314-334 (LGLYALAPVIPRLCLAGFTLA), and 358-378 (GLIGATFLIYTGIAVSTGWYW). The 274-residue stretch at 326 to 599 (LCLAGFTLAQ…LLQIIPSFGA (274 aa)) folds into the ABC transmembrane type-1 1 domain. Residue Asn-384 is glycosylated (N-linked (GlcNAc...) asparagine). The next 4 helical transmembrane spans lie at 428 to 448 (LAYAHELWVAPIETAIGTWML), 452 to 472 (VGPPGLVVLGIIGVCLGTSTY), 535 to 555 (LIVGTLLSSYSTATLAPVLVF), and 577 to 597 (LIWISLLASPLIQLLQIIPSF). Residues 645 to 871 (IHNSSFSYTD…VEDENGDVDN (227 aa)) enclose the ABC transporter 1 domain. Asn-647 carries N-linked (GlcNAc...) asparagine glycosylation. 678–685 (GPAGCGKS) provides a ligand contact to ATP. N-linked (GlcNAc...) asparagine glycosylation occurs at Asn-721. The segment at 853–899 (YQFPPSQADVEDENGDVDNGAENTRPRESSHTTEAQSGPPEPKSKPT) is disordered. 4 helical membrane passes run 913–933 (SIGFLNLVLFIGGGIIFAFCL), 969–989 (VLPLIAVAGWVAQLMMLIVPL), 1037–1054 (LFNTAAALLTGIAQVILI), and 1147–1167 (LVLNLVVAGLALVVMGAAVGL). The region spanning 920–1209 (VLFIGGGIIF…LLTAWTSLET (290 aa)) is the ABC transmembrane type-1 2 domain. An N-linked (GlcNAc...) asparagine glycan is attached at Asn-1189. Over residues 1229 to 1238 (DVLVRPDSLD) the composition is skewed to basic and acidic residues. Positions 1229–1298 (DVLVRPDSLD…DVAADGEKHE (70 aa)) are disordered. The segment covering 1269–1280 (YDDDDESDENTD) has biased composition (acidic residues). In terms of domain architecture, ABC transporter 2 spans 1297-1545 (HEATTITTTS…SDIFAFFGRS (249 aa)). 1333–1340 (GRTGSGKS) contacts ATP. Residue Asn-1496 is glycosylated (N-linked (GlcNAc...) asparagine).

This sequence belongs to the ABC transporter superfamily. ABCC family. Conjugate transporter (TC 3.A.1.208) subfamily.

The protein resides in the membrane. In terms of biological role, ABC-type transporter; part of the gene cluster that mediates the biosynthesis of the phomopsins, a group of hexapeptide mycotoxins which infects lupins and causes lupinosis disease in livestock. This is ABC-type transporter phomO' from Diaporthe leptostromiformis (Lupinosis disease fungus).